The primary structure comprises 248 residues: Cutinase (248 aa).

An N-terminal signal peptide occupies residues 1–17; the sequence is MRSLAILTTLLAGHAFA. The propeptide occupies 18 to 28; that stretch reads YPKPAPQSVNR. Residues 31–70 form a lid covering the active site of the uncomplexed enzyme region; the sequence is WPSINEFLSELAKVMPIGDTITAACDLISDGEDAAASLFG. 2 cysteine pairs are disulfide-bonded: Cys55–Cys91 and Cys79–Cys153. Ser164 serves as the catalytic Nucleophile. Cysteines 212 and 219 form a disulfide. The active site involves Asp216. His229 (proton donor/acceptor) is an active-site residue.

This sequence belongs to the cutinase family.

It is found in the secreted. It carries out the reaction cutin + H2O = cutin monomers.. Weakly inhibited by n-undecyl phosphonate (C11Y4). Activity unaffected by paraoxon. Catalyzes the hydrolysis of complex carboxylic polyesters found in the cell wall of plants. Degrades cutin, a macromolecule that forms the structure of the plant cuticle. The chain is Cutinase from Hypocrea jecorina (strain QM6a) (Trichoderma reesei).